Here is a 353-residue protein sequence, read N- to C-terminus: GTPase Obg (353 aa).

The Obg domain occupies 1 to 159 (MKFLDEAKVY…RWIWLRLKLI (159 aa)). One can recognise an OBG-type G domain in the interval 160-327 (ADAGLVGLPN…ALRALAAVIG (168 aa)). GTP-binding positions include 166–173 (GLPNAGKS), 191–195 (FTTLH), 212–215 (DIPG), 279–282 (NKID), and 308–310 (SGV). Residues Ser173 and Thr193 each contribute to the Mg(2+) site.

It belongs to the TRAFAC class OBG-HflX-like GTPase superfamily. OBG GTPase family. In terms of assembly, monomer. Mg(2+) serves as cofactor.

The protein localises to the cytoplasm. Its function is as follows. An essential GTPase which binds GTP, GDP and possibly (p)ppGpp with moderate affinity, with high nucleotide exchange rates and a fairly low GTP hydrolysis rate. Plays a role in control of the cell cycle, stress response, ribosome biogenesis and in those bacteria that undergo differentiation, in morphogenesis control. This is GTPase Obg from Rhodopseudomonas palustris (strain BisB5).